A 332-amino-acid chain; its full sequence is MPIVVTQAHIDRVGIAADLLDASPVSLQVLGRPTAINTVVIKTYIAAVMELASKQGGSLAGVDIRPSVLLKDTAIFTKPKAKSADVESDVDVLDTGIYSVPGLARKPVTHRWPSEGIYSGVTALMGATGSGKSITLNEKLRPDVLIRWGEVAEAYDELDTAVHISTLDEMLIVCIGLGALGFNVAVDSVRPLLFRLKGAASAGGIVAVFYSLLTDISNLFTQYDCSVVMVVNPMVDAEKIEYVFGQVMASTVGAILCADGNVSRTMFRTNKGRIFNGAAPLAADTHMPSMDRPTSMKALDHTSIASVAPLERGSVDTDDRNSAPRRGANFSL.

Residues 111–138 (RWPSEGIYSGVTALMGATGSGKSITLNE) are involved in the regulation and mechanisms of transcription, replication and genome packaging. 126–133 (GATGSGKS) lines the ATP pocket. The tract at residues 310–332 (LERGSVDTDDRNSAPRRGANFSL) is disordered. Residues 313 to 322 (GSVDTDDRNS) are compositionally biased toward basic and acidic residues.

Homohexamer. Part of the packaging complex composed of RDRP, P4 and P7.

Its subcellular location is the virion. It carries out the reaction a ribonucleoside 5'-triphosphate + H2O = a ribonucleoside 5'-diphosphate + phosphate + H(+). Packaging motor with helicase and translocase activities. Part of the packaging complex that packages the viral RNA segments, replicate them into a double-stranded form and transcribe them. is one of the structural proteins of the polyhedral procapsid, which is responsible for genomic replication and transcription. Displays single-stranded RNA-stimulated NTPase activity. This is Packaging enzyme P4 (P4) from Pseudomonas savastanoi pv. phaseolicola (Pseudomonas syringae pv. phaseolicola).